The sequence spans 402 residues: Multidrug resistance protein MdtH (402 aa).

The next 11 membrane-spanning stretches (helical) occupy residues 13–33 (YFLLIDNMLVVLGFFVVFPLI), 45–65 (ALMVGIALGLRQFIQQGLGIF), 99–116 (PWLLWFSCFLSGLGGTLF), 139–159 (LLMMQDSAGAVTGALLGSWLL), 165–185 (LVCATGAVLFVLCAAFNAWLL), 214–234 (VLTLAGYYMLAVQVMLMLPIM), 244–264 (AVKWMYAIEACLSLTLLYPIA), 277–297 (LMAGLLLMSLSMLPVGLVGNL), 300–322 (LFTLICTFYIGSVIAEPARETLS), 340–360 (LGLAIGGAIGYIGGGWLFDMG), and 368–388 (LPWMMLGVIGIMTFLALGWQF).

It belongs to the major facilitator superfamily. DHA1 family. MdtH (TC 2.A.1.2.21) subfamily.

It is found in the cell inner membrane. This chain is Multidrug resistance protein MdtH, found in Citrobacter koseri (strain ATCC BAA-895 / CDC 4225-83 / SGSC4696).